The primary structure comprises 734 residues: MFGQQLASDVQQYLERLEKQRQQKVGVDEASAGLTLGGDALRVPFLDFATATPKRHQTVVPGVGTLHDCCEHSPLFSAVARRLLFNSLVPAQLRGRDFGGDHTAKLEFLAPELVRAVARLRFRECAPEDAVPQRNAYYSVLNTFQALHRSEAFRQLVHFVRDFAQLLKTSFRASSLAETTGPPKKRAKVDVATHGQTYGTLELFQKMILMHATYFLAAVLLGDHAEQVNTFLRLVFEIPLFSDTAVRHFRQRATVFLVPRRHGKTWFLVPLIALSLASFRGIKIGYTAHIRKATEPVFDEIDACLRGWFGSSRVDHVKGETISFSFPDGSRSTIVFASSHNTNGIRGQDFNLLFVDEANFIRPDAVQTIMGFLNQANCKIIFVSSTNTGKASTSFLYNLRGAADELLNVVTYICDDHMPRVVTHTNATACSCYILNKPVFITMDGAVRRTADLFLPDSFMQEIIGGQARETGDDRPVLTKSAGERFLLYRPSTTTNSGLMAPELYVYVDPAFTANTRASGTGIAVVGRYRDDFIIFALEHFFLRALTGSAPADIARCVVHSLAQVLALHPGAFRSVRVAVEGNSSQDSAVAIATHVHTEMHRILASAGANGPGPELLFYHCEPPGGAVLYPFFLLNKQKTPAFEYFIKKFNSGGVMASQELVSVTVRLQTDPVEYLSEQLNNLIETVSPNTDVRMYSGKRNGAADDLMVAVIMAIYLAAPTGIPPAFFPITRTS.

The short motif at 183–189 (PKKRAKV) is the Nuclear localization signal element. The short motif at 258–265 (VPRRHGKT) is the Walker A motif element. A Walker B motif motif is present at residues 352–357 (LLFVDE). Glutamate 357 serves as the catalytic For ATPase activity. Catalysis depends on for nuclease activity residues aspartate 509, glutamate 581, and aspartate 706.

It belongs to the herpesviridae TRM3 protein family. As to quaternary structure, interacts with the terminase subunits TRM1 and TRM2. Interacts with portal protein.

Its subcellular location is the host nucleus. In terms of biological role, component of the molecular motor that translocates viral genomic DNA in empty capsid during DNA packaging. Forms a tripartite terminase complex together with TRM1 and TRM2 in the host cytoplasm. Once the complex reaches the host nucleus, it interacts with the capsid portal vertex. This portal forms a ring in which genomic DNA is translocated into the capsid. TRM3 carries an RNase H-like nuclease activity that plays an important role for the cleavage of concatemeric viral DNA into unit length genomes. The chain is Tripartite terminase subunit 3 from Human herpesvirus 2 (strain HG52) (HHV-2).